The sequence spans 214 residues: A-type ATP synthase subunit D (214 aa).

It belongs to the V-ATPase D subunit family. In terms of assembly, has multiple subunits with at least A(3), B(3), C, D, E, F, H, I and proteolipid K(x).

The protein resides in the cell membrane. Component of the A-type ATP synthase that produces ATP from ADP in the presence of a proton gradient across the membrane. The chain is A-type ATP synthase subunit D from Methanosphaera stadtmanae (strain ATCC 43021 / DSM 3091 / JCM 11832 / MCB-3).